Here is a 444-residue protein sequence, read N- to C-terminus: Trigger factor (444 aa).

The PPIase FKBP-type domain maps to 160–245; it reads DMQVTFDFEG…VKQVEKPKLP (86 aa).

It belongs to the FKBP-type PPIase family. Tig subfamily.

Its subcellular location is the cytoplasm. The enzyme catalyses [protein]-peptidylproline (omega=180) = [protein]-peptidylproline (omega=0). Its function is as follows. Involved in protein export. Acts as a chaperone by maintaining the newly synthesized protein in an open conformation. Functions as a peptidyl-prolyl cis-trans isomerase. The protein is Trigger factor of Acinetobacter baumannii (strain SDF).